The chain runs to 455 residues: tRNA modification GTPase MnmE (455 aa).

Residues R23, E85, and R124 each contribute to the (6S)-5-formyl-5,6,7,8-tetrahydrofolate site. The TrmE-type G domain occupies 220–375; it reads GVSVVIAGKP…LQDAIFEAFI (156 aa). N230 is a K(+) binding site. GTP is bound by residues 230 to 235, 249 to 255, and 274 to 277; these read NVGKSS, TSVPGTT, and DTAG. Residue S234 coordinates Mg(2+). K(+) is bound by residues T249, V251, and T254. T255 is a Mg(2+) binding site. Residue K455 coordinates (6S)-5-formyl-5,6,7,8-tetrahydrofolate.

This sequence belongs to the TRAFAC class TrmE-Era-EngA-EngB-Septin-like GTPase superfamily. TrmE GTPase family. In terms of assembly, homodimer. Heterotetramer of two MnmE and two MnmG subunits. The cofactor is K(+).

Its subcellular location is the cytoplasm. In terms of biological role, exhibits a very high intrinsic GTPase hydrolysis rate. Involved in the addition of a carboxymethylaminomethyl (cmnm) group at the wobble position (U34) of certain tRNAs, forming tRNA-cmnm(5)s(2)U34. The protein is tRNA modification GTPase MnmE of Geotalea uraniireducens (strain Rf4) (Geobacter uraniireducens).